The sequence spans 1167 residues: ATP-dependent helicase/deoxyribonuclease subunit B (1167 aa).

The UvrD-like helicase ATP-binding domain maps to 1–359 (MSLRFLLGRS…IRQTEAYRDL (359 aa)). ATP is bound at residue 8 to 15 (GRSGSGKT). The UvrD-like helicase C-terminal domain maps to 282 to 588 (ANRRHEDRAL…EFSLVPPAMD (307 aa)). Residues Cys-804, Cys-1126, Cys-1129, and Cys-1135 each coordinate [4Fe-4S] cluster.

Belongs to the helicase family. AddB/RexB type 1 subfamily. Heterodimer of AddA and AddB. Mg(2+) is required as a cofactor. Requires [4Fe-4S] cluster as cofactor.

Functionally, the heterodimer acts as both an ATP-dependent DNA helicase and an ATP-dependent, dual-direction single-stranded exonuclease. Recognizes the chi site generating a DNA molecule suitable for the initiation of homologous recombination. The AddB subunit has 5' -&gt; 3' nuclease activity but not helicase activity. The polypeptide is ATP-dependent helicase/deoxyribonuclease subunit B (Geobacillus kaustophilus (strain HTA426)).